The sequence spans 258 residues: UDP-2,3-diacylglucosamine hydrolase (258 aa).

5 residues coordinate Mn(2+): Asp15, His17, Asp48, Asn88, and His123. Residue 88–89 (NR) coordinates substrate. Positions 131, 169, 173, 176, and 204 each coordinate substrate. Mn(2+) is bound by residues His204 and His206.

This sequence belongs to the LpxH family. Mn(2+) serves as cofactor.

It localises to the cell inner membrane. It carries out the reaction UDP-2-N,3-O-bis[(3R)-3-hydroxytetradecanoyl]-alpha-D-glucosamine + H2O = 2-N,3-O-bis[(3R)-3-hydroxytetradecanoyl]-alpha-D-glucosaminyl 1-phosphate + UMP + 2 H(+). It functions in the pathway glycolipid biosynthesis; lipid IV(A) biosynthesis; lipid IV(A) from (3R)-3-hydroxytetradecanoyl-[acyl-carrier-protein] and UDP-N-acetyl-alpha-D-glucosamine: step 4/6. Hydrolyzes the pyrophosphate bond of UDP-2,3-diacylglucosamine to yield 2,3-diacylglucosamine 1-phosphate (lipid X) and UMP by catalyzing the attack of water at the alpha-P atom. Involved in the biosynthesis of lipid A, a phosphorylated glycolipid that anchors the lipopolysaccharide to the outer membrane of the cell. The polypeptide is UDP-2,3-diacylglucosamine hydrolase (Bordetella bronchiseptica (strain ATCC BAA-588 / NCTC 13252 / RB50) (Alcaligenes bronchisepticus)).